A 171-amino-acid polypeptide reads, in one-letter code: Transcriptional repressor NrdR (171 aa).

Residues 1 to 10 are compositionally biased toward basic residues; the sequence is MQCPHCHHNG. The interval 1–21 is disordered; the sequence is MQCPHCHHNGSRVVDSRPTDD. A zinc finger lies at 3-34; that stretch reads CPHCHHNGSRVVDSRPTDDGRVIRRRRECENC. An ATP-cone domain is found at 49–139; the sequence is LLVIKKNGAR…VYRQFKDMHV (91 aa). Residues 152–171 form a disordered region; it reads KVKLAKPSAKTTHAPKRKKD.

It belongs to the NrdR family. Requires Zn(2+) as cofactor.

Functionally, negatively regulates transcription of bacterial ribonucleotide reductase nrd genes and operons by binding to NrdR-boxes. The protein is Transcriptional repressor NrdR of Lactiplantibacillus plantarum (strain ATCC BAA-793 / NCIMB 8826 / WCFS1) (Lactobacillus plantarum).